Consider the following 450-residue polypeptide: Ribosomal protein uS12 methylthiotransferase RimO (450 aa).

The MTTase N-terminal domain maps to 10–125; it reads SRIALVSLGC…VVDIVRRAAT (116 aa). Residues Cys-19, Cys-54, Cys-88, Cys-162, Cys-166, and Cys-169 each coordinate [4Fe-4S] cluster. Positions 148 to 378 constitute a Radical SAM core domain; sequence SGSPFTAYLK…AAVQREVSRA (231 aa). In terms of domain architecture, TRAM spans 381-447; the sequence is RARVGSEVTV…PYDLRARVLS (67 aa).

The protein belongs to the methylthiotransferase family. RimO subfamily. It depends on [4Fe-4S] cluster as a cofactor.

The protein resides in the cytoplasm. The catalysed reaction is L-aspartate(89)-[ribosomal protein uS12]-hydrogen + (sulfur carrier)-SH + AH2 + 2 S-adenosyl-L-methionine = 3-methylsulfanyl-L-aspartate(89)-[ribosomal protein uS12]-hydrogen + (sulfur carrier)-H + 5'-deoxyadenosine + L-methionine + A + S-adenosyl-L-homocysteine + 2 H(+). Functionally, catalyzes the methylthiolation of an aspartic acid residue of ribosomal protein uS12. The chain is Ribosomal protein uS12 methylthiotransferase RimO from Desulforudis audaxviator (strain MP104C).